We begin with the raw amino-acid sequence, 506 residues long: Maturase K (506 aa).

Belongs to the intron maturase 2 family. MatK subfamily.

The protein localises to the plastid. It is found in the chloroplast. Usually encoded in the trnK tRNA gene intron. Probably assists in splicing its own and other chloroplast group II introns. This is Maturase K from Trifolium subterraneum (Subterranean clover).